An 83-amino-acid chain; its full sequence is Exodeoxyribonuclease 7 small subunit (83 aa).

It belongs to the XseB family. As to quaternary structure, heterooligomer composed of large and small subunits.

It is found in the cytoplasm. The enzyme catalyses Exonucleolytic cleavage in either 5'- to 3'- or 3'- to 5'-direction to yield nucleoside 5'-phosphates.. Its function is as follows. Bidirectionally degrades single-stranded DNA into large acid-insoluble oligonucleotides, which are then degraded further into small acid-soluble oligonucleotides. The protein is Exodeoxyribonuclease 7 small subunit of Afipia carboxidovorans (strain ATCC 49405 / DSM 1227 / KCTC 32145 / OM5) (Oligotropha carboxidovorans).